Reading from the N-terminus, the 85-residue chain is Small ribosomal subunit protein bS16c (85 aa).

It belongs to the bacterial ribosomal protein bS16 family.

The protein resides in the plastid. Its subcellular location is the chloroplast. The protein is Small ribosomal subunit protein bS16c of Nicotiana tabacum (Common tobacco).